We begin with the raw amino-acid sequence, 685 residues long: Sodium-dependent phosphate transporter 1-A (685 aa).

6 helical membrane passes run 21–41 (IMAPYLWMLVLGFVIAFVLAF), 66–86 (ACILASIFETVGSVLLGAKVS), 106–126 (LMAGSISAMFGSAVWQLAASF), 162–182 (IVLSWFISPLLSGIMSALLFL), 207–227 (ACTIGINLFSIMFTGAPLLGF), and 234–254 (GIILISVGCAVLCALIVWFVV). Disordered stretches follow at residues 438-458 (RNRDTEARPDEAEKSTVHGAD) and 483-513 (EAEEQEEGSVEDVETDRKSSSSSLEERHDQD). Residues 483–496 (EAEEQEEGSVEDVE) are compositionally biased toward acidic residues. Residues 497 to 513 (TDRKSSSSSLEERHDQD) are compositionally biased toward basic and acidic residues. 4 helical membrane passes run 517–537 (VSLLFQFLQILTACFGSFAHG), 565–585 (ATPIWLLLYGGIGICIGLWVW), 606–626 (FSIELASALTVVIASNVGLPI), and 656–676 (IFLAWFVTVPISGLISAGIMA).

The protein belongs to the inorganic phosphate transporter (PiT) (TC 2.A.20) family.

It is found in the membrane. Sodium-phosphate symporter which plays a fundamental housekeeping role in phosphate transport. The protein is Sodium-dependent phosphate transporter 1-A (slc20a1-a) of Xenopus laevis (African clawed frog).